A 139-amino-acid polypeptide reads, in one-letter code: Growth factor (139 aa).

A signal peptide spans Met-1–Ala-19. N-linked (GlcNAc...) asparagine; by host glycosylation is present at Asn-34. The region spanning Ala-41–Gln-81 is the EGF-like domain. Disulfide bonds link Cys-45–Cys-58, Cys-53–Cys-69, and Cys-71–Cys-80. Asn-95 is a glycosylation site (N-linked (GlcNAc...) asparagine; by host).

It belongs to the orthopoxvirus OPG019 family.

Its subcellular location is the secreted. Stimulates cellular proliferation (hyperplasia)and mobility around infected cells to promote rapid and efficient spread of infection. This Camelus protein is Growth factor (OPG019).